The following is a 147-amino-acid chain: MTLEILDIMKLLPHRYPFLLVDRIEDLEPGKRAVGIKNVTINEPFFQGHYPGHPIMPGVLIIEAMAQVGGAVAAITAGDKDDQVPYFTGINKARFRRPVGPGDVLQLQLELLSSRRGLFVFSGKAYVDGNLVAEAELKAVFAPRSQD.

The active site involves His49.

This sequence belongs to the thioester dehydratase family. FabZ subfamily.

The protein resides in the cytoplasm. It catalyses the reaction a (3R)-hydroxyacyl-[ACP] = a (2E)-enoyl-[ACP] + H2O. Its function is as follows. Involved in unsaturated fatty acids biosynthesis. Catalyzes the dehydration of short chain beta-hydroxyacyl-ACPs and long chain saturated and unsaturated beta-hydroxyacyl-ACPs. The sequence is that of 3-hydroxyacyl-[acyl-carrier-protein] dehydratase FabZ from Syntrophotalea carbinolica (strain DSM 2380 / NBRC 103641 / GraBd1) (Pelobacter carbinolicus).